A 374-amino-acid polypeptide reads, in one-letter code: Tomoregulin-2 (374 aa).

The signal sequence occupies residues 1-40 (MVLWESPRQCSSWTLCEGFCWLLLLPVTLLIIARPVKLAA). At 41-320 (FPTSLSDCQT…VPGPVRFQYV (280 aa)) the chain is on the extracellular side. Residue N55 is glycosylated (N-linked (GlcNAc...) asparagine). Kazal-like domains lie at 90 to 137 (VCQF…SCAT) and 181 to 229 (VCNI…RCQD). Disulfide bonds link C91–C121, C95–C114, C103–C135, C182–C213, C186–C206, and C195–C227. A glycan (N-linked (GlcNAc...) asparagine) is linked at N230. The EGF-like domain maps to 261-301 (HHIPCPEHYNGFCMHGKCEHSINMQEPSCRCDAGYTGQHCE). Intrachain disulfides connect C265/C278, C273/C289, and C291/C300. The required for shedding stretch occupies residues 303-320 (KDYSVLYVVPGPVRFQYV). The helical transmembrane segment at 321 to 341 (LIAAVIGTIQIAVICVVVLCI) threads the bilayer. Topologically, residues 342–374 (TRKCPRSNRIHRQKQNTGHYSSDNTTRASTRLI) are cytoplasmic. The tract at residues 353-374 (RQKQNTGHYSSDNTTRASTRLI) is disordered. A compositionally biased stretch (polar residues) spans 356 to 374 (QNTGHYSSDNTTRASTRLI).

Belongs to the tomoregulin family. In terms of processing, O-glycosylated; contains chondroitin sulfate glycosaminoglycans. Post-translationally, a soluble form (TMEFF2-ECD) is produced by proteolytic shedding. This shedding can be induced by phorbol ester or pro-inflammatory cytokines such as TNFalpha, and is mediated by a metalloproteinase ADAM. Widely expressed in the brain. In the olfactory bulb expressed in mitral cell, granule, and glomerular layers. In the hippocampus expressed in hippocampal cornu ammonis, pyramidal layer, dentate gyrus, and substantia nigra pars compacta.

It is found in the membrane. Functionally, may be a survival factor for hippocampal and mesencephalic neurons. The shedded form may up-regulate cell proliferation. This chain is Tomoregulin-2 (Tmeff2), found in Mus musculus (Mouse).